A 471-amino-acid polypeptide reads, in one-letter code: Desmin (471 aa).

The tract at residues 2-109 (SQAYSSSQRV…QEFLTTRTNE (108 aa)) is head. Phosphoserine; by CDK1 is present on Ser7. Residue Ser12 is modified to Phosphoserine; by AURKB. At Arg16 the chain carries Omega-N-methylarginine. At Thr17 the chain carries Phosphothreonine; by AURKB and ROCK1. Ser28 is modified (phosphoserine; by CDK1). At Ser31 the chain carries Phosphoserine. Ser32 is subject to Phosphoserine; by CDK1. Asymmetric dimethylarginine; alternate is present on Arg37. Arg37 carries the post-translational modification Omega-N-methylarginine; alternate. Phosphoserine is present on Ser45. An ADP-ribosylarginine modification is found at Arg58. Ser60 bears the Phosphoserine; by AURKB mark. Omega-N-methylarginine is present on Arg70. Thr77 carries the post-translational modification Phosphothreonine; by ROCK1. Phosphoserine is present on Ser81. The 309-residue stretch at 109–417 (EKVELQELND…KLLEGEESRI (309 aa)) folds into the IF rod domain. The interval 110 to 142 (KVELQELNDRFANYIEKVRFLEQQNAALAAEVN) is coil 1A. The tract at residues 143–152 (RLKGREPTRV) is linker 1. The segment at 153–253 (AEIYEEELRE…HEEEIRELQA (101 aa)) is coil 1B. A linker 12 region spans residues 254–269 (QLQEQQVQVEMDMSKP). The interaction with NEB stretch occupies residues 269-416 (PDLTAALRDI…RKLLEGEESR (148 aa)). The coil 2A stretch occupies residues 270-288 (DLTAALRDIRAQYETIAAK). The linker 2 stretch occupies residues 289-296 (NISEAEEW). Ser291, Ser359, Ser362, and Ser425 each carry phosphoserine. Positions 297 to 413 (YKSKVSDLTQ…ATYRKLLEGE (117 aa)) are coil 2B. The interval 414 to 471 (ESRINLPIQTFSALNFRETSPEQRGSEVHTKKTVMIKTIETRDGEVVSEATQQQHEVL) is tail. The interaction with CRYAB stretch occupies residues 439–454 (SEVHTKKTVMIKTIET).

The protein belongs to the intermediate filament family. As to quaternary structure, homomer. Interacts with DST. Interacts with MTM1. Interacts with EPPK1; interaction is dependent of higher-order structure of intermediate filament. Interacts with CRYAB. Interacts with NEB (via nebulin repeats 160-164). Interacts (via rod region) with NEBL (via nebulin repeats 1-5). Interacts with ASB2; the interaction targets DES for proteasomal degradation. Interacts with PKP1. Interacts with FLII. Post-translationally, ADP-ribosylation prevents ability to form intermediate filaments. Phosphorylation at Ser-7, Ser-28 and Ser-32 by CDK1 and phosphorylation at Ser-60 by AURKB contribute to efficient separation of desmin intermediate filaments during mitosis. In terms of processing, ubiquitination by a SCF-like complex containing ASB2 leads to proteasomal degradation.

Its subcellular location is the cytoplasm. The protein resides in the myofibril. The protein localises to the sarcomere. It localises to the z line. It is found in the cell membrane. Its subcellular location is the sarcolemma. The protein resides in the nucleus. The protein localises to the cell tip. It localises to the nucleus envelope. Functionally, muscle-specific type III intermediate filament essential for proper muscular structure and function. Plays a crucial role in maintaining the structure of sarcomeres, inter-connecting the Z-disks and forming the myofibrils, linking them not only to the sarcolemmal cytoskeleton, but also to the nucleus and mitochondria, thus providing strength for the muscle fiber during activity. In adult striated muscle they form a fibrous network connecting myofibrils to each other and to the plasma membrane from the periphery of the Z-line structures. May act as a sarcomeric microtubule-anchoring protein: specifically associates with detyrosinated tubulin-alpha chains, leading to buckled microtubules and mechanical resistance to contraction. Required for nuclear membrane integrity, via anchoring at the cell tip and nuclear envelope, resulting in maintenance of microtubule-derived intracellular mechanical forces. Contributes to the transcriptional regulation of the NKX2-5 gene in cardiac progenitor cells during a short period of cardiomyogenesis and in cardiac side population stem cells in the adult. Plays a role in maintaining an optimal conformation of nebulette (NEB) on heart muscle sarcomeres to bind and recruit cardiac alpha-actin. The protein is Desmin (DES) of Sus scrofa (Pig).